Reading from the N-terminus, the 976-residue chain is Peptidylglycine alpha-amidating monooxygenase (976 aa).

Residues 1 to 25 form the signal peptide; that stretch reads MAGRARSGLLLLLLGLLALQSSCLA. The segment at 1–497 is peptidylglycine alpha-hydroxylating monooxygenase; it reads MAGRARSGLL…EGPWEPEPSG (497 aa). Positions 26-35 are excised as a propeptide; sequence FRSPLSVFKR. Residues 36–866 are Intragranular-facing; it reads FKETTRSFSN…QKLSTEPGSG (831 aa). 5 disulfide bridges follow: Cys-47–Cys-186, Cys-81–Cys-126, Cys-114–Cys-131, Cys-227–Cys-334, and Cys-293–Cys-315. Residues His-107 and His-108 each coordinate Cu(2+). Cu(2+) is bound by residues His-172, His-242, His-244, and Met-314. The interval 498–820 is peptidyl-alpha-hydroxyglycine alpha-amidating lyase; sequence DFHVEEELDW…LTEKMEHRSV (323 aa). NHL repeat units lie at residues 501 to 544, 570 to 611, 620 to 665, and 673 to 717; these read VEEE…NSFD, AEIL…LDPH, LGRS…FSPS, and GEES…FKTD. Val-520 lines the Ca(2+) pocket. Arg-533 serves as a coordination point for a protein. His-585 is a Zn(2+) binding site. Residue Leu-587 coordinates Ca(2+). The cysteines at positions 634 and 655 are disulfide-linked. Residue Tyr-654 participates in a protein binding. A Zn(2+)-binding site is contributed by His-690. Residues Cys-702 and Cys-713 are joined by a disulfide bond. Arg-706 serves as a coordination point for a protein. Asn-765 carries N-linked (GlcNAc...) asparagine glycosylation. The NHL 5 repeat unit spans residues 769 to 812; sequence GEIIDVFKPVRKHFDMPHDIVASEDGTVYIGDAHTNTVWKFTLT. Val-774 is subject to Sulfotyrosine. His-786 contributes to the Zn(2+) binding site. Asp-787 contacts Ca(2+). A Sulfotyrosine modification is found at Glu-792. Residues 867–890 traverse the membrane as a helical segment; it reads VSVVLITTLLVIPVLVLLAIVMFI. The Cytoplasmic segment spans residues 891–976; that stretch reads RWKKSRAFGD…APLPKPAPSS (86 aa). 3 positions are modified to phosphoserine: Ser-921, Ser-932, and Ser-945. Residues 928-945 are interaction with RASSF9; it reads NFFASRKGYSRKGFDRVS. The disordered stretch occupies residues 940–976; the sequence is GFDRVSTEGSDQEKDEDDGTESEEEYSAPLPKPAPSS. A Phosphothreonine modification is found at Thr-946. At Ser-949 the chain carries Phosphoserine. Positions 952–965 are enriched in acidic residues; sequence EKDEDDGTESEEEY. The residue at position 959 (Thr-959) is a Phosphothreonine. Residue Ser-961 is modified to Phosphoserine.

This sequence in the C-terminal section; belongs to the peptidyl-alpha-hydroxyglycine alpha-amidating lyase family. The protein in the N-terminal section; belongs to the copper type II ascorbate-dependent monooxygenase family. As to quaternary structure, monomer. Interacts with RASSF9. Zn(2+) serves as cofactor. It depends on Cu(2+) as a cofactor.

The protein localises to the cytoplasmic vesicle. The protein resides in the secretory vesicle membrane. It localises to the membrane. Its subcellular location is the secreted. It catalyses the reaction a [peptide]-C-terminal glycine + 2 L-ascorbate + O2 = a [peptide]-C-terminal (2S)-2-hydroxyglycine + 2 monodehydro-L-ascorbate radical + H2O. The enzyme catalyses a [peptide]-C-terminal (2S)-2-hydroxyglycine = a [peptide]-C-terminal amide + glyoxylate. The catalysed reaction is N-dodecanoylglycine + 2 L-ascorbate + O2 = N-dodecanoyl-(2S)-hydroxyglycine + 2 monodehydro-L-ascorbate radical + H2O. It carries out the reaction N-dodecanoyl-(2S)-hydroxyglycine = dodecanamide + glyoxylate. It catalyses the reaction N-(9Z,12Z,15Z)-octadecatrienoylglycine + 2 L-ascorbate + O2 = N-(9Z,12Z,15Z)-octadecatrienoyl-(2S)-hydroxyglycine + 2 monodehydro-L-ascorbate radical + H2O. The enzyme catalyses N-(9Z,12Z,15Z)-octadecatrienoyl-(2S)-hydroxyglycine = (9Z,12Z,15Z)-octadecatrienamide + glyoxylate. The catalysed reaction is N-(9Z-octadecenoyl)glycine + 2 L-ascorbate + O2 = N-(9Z-octadecenoyl)-(2S)-hydroxyglycine + 2 monodehydro-L-ascorbate radical + H2O. It carries out the reaction N-(9Z-octadecenoyl)-(2S)-hydroxyglycine = (9Z)-octadecenamide + glyoxylate. It catalyses the reaction N-tetradecanoylglycine + 2 L-ascorbate + O2 = N-tetradecanoyl-(2S)-hydroxyglycine + 2 monodehydro-L-ascorbate radical + H2O. The enzyme catalyses N-tetradecanoyl-(2S)-hydroxyglycine = tetradecamide + glyoxylate. The catalysed reaction is N-decanoylglycine + 2 L-ascorbate + O2 = N-decanoyl-(2S)-hydroxyglycine + 2 monodehydro-L-ascorbate radical + H2O. It carries out the reaction N-decanoyl-(2S)-hydroxyglycine = decanamide + glyoxylate. It catalyses the reaction N-octanoylglycine + 2 L-ascorbate + O2 = N-octanoyl-(2S)-hydroxyglycine + 2 monodehydro-L-ascorbate radical + H2O. The enzyme catalyses N-octanoyl-(2S)-hydroxyglycine = octanamide + glyoxylate. Its activity is regulated as follows. PAM activity is inhibited by EDTA, phenylglyoxal and diethyl pyrocarbonate. PAL activity is stimulated by cadmium and inhibited by mercury. Its function is as follows. Bifunctional enzyme that catalyzes amidation of the C-terminus of proteins. Alpha-amidation is present at the C-terminus of many endocrine hormones and neuropeptides and is required for their activity. C-terminal amidation also takes place in response to protein fragmentation triggered by oxidative stress, promoting degradation of amidated protein fragments by the proteasome. Alpha-amidation involves two sequential reactions, both of which are catalyzed by separate catalytic domains of the enzyme. The first step, catalyzed by peptidyl alpha-hydroxylating monooxygenase (PHM) domain, is the copper-, ascorbate-, and O2- dependent stereospecific hydroxylation (with S stereochemistry) at the alpha-carbon (C-alpha) of the C-terminal glycine of the peptidylglycine substrate. The second step, catalyzed by the peptidylglycine amidoglycolate lyase (PAL) domain, is the zinc-dependent cleavage of the N-C-alpha bond, producing the alpha-amidated peptide and glyoxylate. Similarly, catalyzes the two-step conversion of an N-fatty acylglycine to a primary fatty acid amide and glyoxylate. The chain is Peptidylglycine alpha-amidating monooxygenase from Rattus norvegicus (Rat).